Consider the following 69-residue polypeptide: MELKASEFGVVLSVDALKLSRQSPLGVGIGGGGGGGGGGSCGGQGGGCGGCSNGCSGGNGGSGGSGSHI.

Positions 1-26 are excised as a propeptide; sequence MELKASEFGVVLSVDALKLSRQSPLG. The segment at residues 39–40 is a cross-link (oxazole-4-carboxylic acid (Gly-Ser)); it reads GS. The segment at residues 40–41 is a cross-link (thiazole-4-carboxylic acid (Ser-Cys)); the sequence is SC. Cross-links (thiazole-4-carboxylic acid (Gly-Cys)) lie at residues 47 to 48, 50 to 51, and 54 to 55; these read GC. The segment at residues 55-56 is a cross-link (oxazole-4-carboxylic acid (Cys-Ser)); the sequence is CS. 2 consecutive cross-links (oxazole-4-carboxylic acid (Gly-Ser)) follow at residues 61–62 and 64–65; these read GS.

Post-translationally, the processed N-terminus does not resemble a typical secretion signal sequence. Maturation of thiazole and oxazole containing antibiotics involves the enzymatic condensation of a Cys, Ser or Thr with the alpha-carbonyl of the preceding amino acid to form a thioether or ether bond, then dehydration to form a double bond with the alpha-amino nitrogen. Thiazoline or oxazoline rings are dehydrogenated to form thiazole or oxazole rings.

Its function is as follows. This glycine-rich peptide antibiotic inhibits DNA replication in many enteric bacteria, that leads to induction of the SOS repair system, massive DNA degradation and cell death. B17 inhibits type II topoisomerase by trapping an enzyme - DNA cleavable complex. The sequence is that of Bacteriocin microcin B17 (mcbA) from Escherichia coli.